A 453-amino-acid chain; its full sequence is Serine incorporator 1 (453 aa).

Glycine 2 is lipidated: N-myristoyl glycine. At 2–39 (GSVLGLCSMASWIPCLCGSAPCLLCRCCPSGNNSTVTR) the chain is on the cytoplasmic side. A helical membrane pass occupies residues 40–60 (LIYALFLLVGVCVACVMLIPG). At 61 to 88 (MEEQLNKIPGFCENEKGVVPCNILVGYK) the chain is on the lumenal side. A helical transmembrane segment spans residues 89 to 109 (AVYRLCFGLAMFYLLLSLLMI). Topologically, residues 110–123 (KVKSSSDPRAAVHN) are cytoplasmic. The chain crosses the membrane as a helical span at residues 124–144 (GFWFFKFAAAIAIIIGAFFIP). The Lumenal segment spans residues 145-151 (EGTFTTV). Residues 152-172 (WFYVGMAGAFCFILIQLVLLI) form a helical membrane-spanning segment. The Cytoplasmic portion of the chain corresponds to 173-197 (DFAHSWNESWVEKMEEGNSRCWYAA). Residues 198-218 (LLSATALNYLLSLVAIVLFFV) form a helical membrane-spanning segment. Topologically, residues 219 to 231 (YYTHPASCSENKA) are lumenal. The helical transmembrane segment at 232-252 (FISVNMLLCIGASVMSILPKI) threads the bilayer. The Cytoplasmic segment spans residues 253–259 (QESQPRS). A helical transmembrane segment spans residues 260–280 (GLLQSSVITVYTMYLTWSAMT). Residues 281–309 (NEPETNCNPSLLSIIGYNTTSTVPKEGQS) are Lumenal-facing. Residues 310–330 (VQWWHAQGIIGLILFLLCVFY) form a helical membrane-spanning segment. At 331–387 (SSIRTSNNSQVNKLTLTSDESTLIEDGGARSDGSLEDGDDVHRAVDNERDGVTYSYS) the chain is on the cytoplasmic side. Serine 351 carries the phosphoserine modification. Threonine 352 is subject to Phosphothreonine. Phosphoserine is present on residues serine 361 and serine 364. The helical transmembrane segment at 388-408 (FFHFMLFLASLYIMMTLTNWY) threads the bilayer. Topologically, residues 409-426 (RYEPSREMKSQWTAVWVK) are lumenal. The chain crosses the membrane as a helical span at residues 427-447 (ISSSWIGIVLYVWTLVAPLVL). Over 448 to 453 (TNRDFD) the chain is Cytoplasmic.

Belongs to the TDE1 family. Interacts with SPTLC1.

It localises to the endoplasmic reticulum membrane. Functionally, enhances the incorporation of serine into phosphatidylserine and sphingolipids. This chain is Serine incorporator 1 (SERINC1), found in Pongo abelii (Sumatran orangutan).